Reading from the N-terminus, the 277-residue chain is Large ribosomal subunit protein uL2 (277 aa).

Positions 222–277 are disordered; it reads GVTMNPVDHPHGGGEGRTSGGRHPVTPWGKPTKGKKTRSNKSTNKFILISRHKRKK.

It belongs to the universal ribosomal protein uL2 family. As to quaternary structure, part of the 50S ribosomal subunit. Forms a bridge to the 30S subunit in the 70S ribosome.

Its function is as follows. One of the primary rRNA binding proteins. Required for association of the 30S and 50S subunits to form the 70S ribosome, for tRNA binding and peptide bond formation. It has been suggested to have peptidyltransferase activity; this is somewhat controversial. Makes several contacts with the 16S rRNA in the 70S ribosome. This chain is Large ribosomal subunit protein uL2, found in Rhodopseudomonas palustris (strain BisB18).